A 234-amino-acid chain; its full sequence is N-acetyl-alpha-D-glucosaminyl L-malate deacetylase 1 (234 aa).

The Zn(2+) site is built by histidine 12, aspartate 15, and histidine 113.

This sequence belongs to the PIGL family. The cofactor is Zn(2+).

It catalyses the reaction (S)-malyl N-acetyl-alpha-D-glucosaminide + H2O = (S)-malyl alpha-D-glucosaminide + acetate. With respect to regulation, inhibited by BSH. Involved in bacillithiol (BSH) biosynthesis. Catalyzes the second step of the pathway, the deacetylation of N-acetylglucosaminylmalate (GlcNAc-Mal) to glucosamine malate (GlcN-Mal). This Bacillus anthracis protein is N-acetyl-alpha-D-glucosaminyl L-malate deacetylase 1.